Reading from the N-terminus, the 400-residue chain is Ribose-phosphate pyrophosphokinase 2, chloroplastic (400 aa).

The transit peptide at 1-44 directs the protein to the chloroplast; the sequence is MASLALTSPPSVKIPSYLSSSSSSLFSRSSISFRTTESRSRICV. Mg(2+) contacts are provided by D214, H216, D225, and D229. A binding of phosphoribosylpyrophosphate region spans residues 300–315; sequence GKVAVMVDDIIDTAGT.

This sequence belongs to the ribose-phosphate pyrophosphokinase family.

The protein localises to the plastid. The protein resides in the chloroplast. It carries out the reaction D-ribose 5-phosphate + ATP = 5-phospho-alpha-D-ribose 1-diphosphate + AMP + H(+). The protein is Ribose-phosphate pyrophosphokinase 2, chloroplastic (PRS2) of Arabidopsis thaliana (Mouse-ear cress).